The chain runs to 130 residues: Small ribosomal subunit protein uS9 (130 aa).

It belongs to the universal ribosomal protein uS9 family.

The chain is Small ribosomal subunit protein uS9 from Caldicellulosiruptor bescii (strain ATCC BAA-1888 / DSM 6725 / KCTC 15123 / Z-1320) (Anaerocellum thermophilum).